A 218-amino-acid polypeptide reads, in one-letter code: Ribose-5-phosphate isomerase A (218 aa).

Substrate is bound by residues 28 to 31 (TGST), 81 to 84 (DGAD), and 94 to 97 (KGGG). Glu103 serves as the catalytic Proton acceptor. A substrate-binding site is contributed by Lys121.

It belongs to the ribose 5-phosphate isomerase family. In terms of assembly, homodimer.

It carries out the reaction aldehydo-D-ribose 5-phosphate = D-ribulose 5-phosphate. It participates in carbohydrate degradation; pentose phosphate pathway; D-ribose 5-phosphate from D-ribulose 5-phosphate (non-oxidative stage): step 1/1. Its function is as follows. Catalyzes the reversible conversion of ribose-5-phosphate to ribulose 5-phosphate. This is Ribose-5-phosphate isomerase A from Thioalkalivibrio sulfidiphilus (strain HL-EbGR7).